Consider the following 519-residue polypeptide: Polyamine aminopropyltransferase (519 aa).

Helical transmembrane passes span 17–37, 53–73, 86–106, 109–129, 158–178, 180–200, and 208–228; these read LLLVSVAICAASGLVYELALV, LIVAGYVAALGVGAILVKPFL, LLGLIGGLSALVLYMTFAVVG, LWMLVLATALIGILVGAELPL, LGALLGGLAWPFILLPWLGMM, GAAAAGMINLLAALFVGCVLL, and QFIRAVVALLVAIAVLGTVLV. Residues 200-463 form a spermidine synthase region; it reads LRHLLPRAQF…FQLCGPEGTE (264 aa). One can recognise a PABS domain in the interval 225-459; that stretch reads TVLVRSDGIV…GDWGFQLCGP (235 aa). An S-methyl-5'-thioadenosine-binding site is contributed by Gln-255. Residue Asp-307 participates in spermidine binding. Residues Glu-326 and 358–359 each bind S-methyl-5'-thioadenosine; that span reads DA. The Proton acceptor role is filled by Asp-379.

It belongs to the spermidine/spermine synthase family. Homodimer or homotetramer.

It is found in the cell membrane. It catalyses the reaction S-adenosyl 3-(methylsulfanyl)propylamine + putrescine = S-methyl-5'-thioadenosine + spermidine + H(+). It participates in amine and polyamine biosynthesis; spermidine biosynthesis; spermidine from putrescine: step 1/1. Its function is as follows. Catalyzes the irreversible transfer of a propylamine group from the amino donor S-adenosylmethioninamine (decarboxy-AdoMet) to putrescine (1,4-diaminobutane) to yield spermidine. The polypeptide is Polyamine aminopropyltransferase (Corynebacterium efficiens (strain DSM 44549 / YS-314 / AJ 12310 / JCM 11189 / NBRC 100395)).